We begin with the raw amino-acid sequence, 95 residues long: Co-chaperonin GroES (95 aa).

The protein belongs to the GroES chaperonin family. As to quaternary structure, heptamer of 7 subunits arranged in a ring. Interacts with the chaperonin GroEL.

It localises to the cytoplasm. Its function is as follows. Together with the chaperonin GroEL, plays an essential role in assisting protein folding. The GroEL-GroES system forms a nano-cage that allows encapsulation of the non-native substrate proteins and provides a physical environment optimized to promote and accelerate protein folding. GroES binds to the apical surface of the GroEL ring, thereby capping the opening of the GroEL channel. This Desulfotalea psychrophila (strain LSv54 / DSM 12343) protein is Co-chaperonin GroES.